The primary structure comprises 404 residues: Lissencephaly-1 homolog (404 aa).

The 33-residue stretch at 7 to 39 (QKEEINRAIAEYMQNNGYSESFSVFLKESSLSE) folds into the LisH domain. Residues 54-81 (TTVLRLQRKVNDLESKLQESQREINHGA) are a coiled coil. Over residues 69–89 (KLQESQREINHGAPTRDKRQA) the composition is skewed to basic and acidic residues. Residues 69-90 (KLQESQREINHGAPTRDKRQAA) form a disordered region. WD repeat units lie at residues 104–145 (GHRL…RTLK), 146–185 (GHTD…DCLK), 189–228 (GHEH…CVYT), 231–270 (GHND…AKLV), 273–327 (DHEH…VLFT), 330–369 (AHEN…CMKA), and 372–404 (AHEH…WECR).

The protein belongs to the WD repeat LIS1/nudF family. As to quaternary structure, component of a dynein-regulating complex composed of at least lis-1 and nud-2. Interacts with nud-2; the interaction is direct. In terms of tissue distribution, expressed in all classes of neurons in the ventral cord. Expressed in the multinucleate spermathecal valves and adult seam cells.

The protein resides in the cytoplasm. The protein localises to the cytoskeleton. It localises to the microtubule organizing center. It is found in the centrosome. Its subcellular location is the chromosome. The protein resides in the centromere. The protein localises to the kinetochore. It localises to the nucleus envelope. Its function is as follows. Positively regulates the activity of the minus-end directed microtubule motor protein dynein. May enhance dynein-mediated microtubule sliding by targeting dynein to the microtubule plus end. Required for several dynein- and microtubule-dependent processes such as nuclear migration during cell division. Part of a complex with nud-2, which is recruited to the nuclear envelope by unc-83, where, in turn, it recruits dynein to the nuclear surface and regulates nuclear migration in hypodermal precursor cells. Plays a role in GABAergic synaptic vesicle localization in the ventral nerve cord. Required for neuronal cell differentiation. In Caenorhabditis elegans, this protein is Lissencephaly-1 homolog.